The sequence spans 412 residues: Phosphatidylinositol 3,4,5-trisphosphate 3-phosphatase and protein-tyrosine-phosphatase PTEN1 (412 aa).

The Phosphatase tensin-type domain maps to 42–211 (RRLIIGGYDL…KYWSDLLSFS (170 aa)). The active-site Phosphocysteine intermediate is C152. One can recognise a C2 tensin-type domain in the interval 239 to 396 (VDSVFFVVSE…FSLELLFGPA (158 aa)).

It belongs to the PTEN phosphatase protein family. Expressed exclusively in pollen grains during the late stage of development (at protein level).

It catalyses the reaction O-phospho-L-tyrosyl-[protein] + H2O = L-tyrosyl-[protein] + phosphate. It carries out the reaction a 1,2-diacyl-sn-glycero-3-phospho-(1D-myo-inositol-3,4,5-trisphosphate) + H2O = a 1,2-diacyl-sn-glycero-3-phospho-(1D-myo-inositol-4,5-bisphosphate) + phosphate. Inhibited by vanadate. In terms of biological role, protein tyrosine phosphatase that also exhibits lipid phosphatase activity. Can use phosphatidylinositol substrates such as PtdIns(3,4,5)P(3) as substrate. Pollen-specific phosphatase required for pollen development. In Arabidopsis thaliana (Mouse-ear cress), this protein is Phosphatidylinositol 3,4,5-trisphosphate 3-phosphatase and protein-tyrosine-phosphatase PTEN1.